We begin with the raw amino-acid sequence, 75 residues long: Exodeoxyribonuclease 7 small subunit (75 aa).

It belongs to the XseB family. Heterooligomer composed of large and small subunits.

It is found in the cytoplasm. The catalysed reaction is Exonucleolytic cleavage in either 5'- to 3'- or 3'- to 5'-direction to yield nucleoside 5'-phosphates.. Functionally, bidirectionally degrades single-stranded DNA into large acid-insoluble oligonucleotides, which are then degraded further into small acid-soluble oligonucleotides. This chain is Exodeoxyribonuclease 7 small subunit, found in Elusimicrobium minutum (strain Pei191).